Reading from the N-terminus, the 737-residue chain is Polyribonucleotide nucleotidyltransferase (737 aa).

Residues Asp489 and Asp495 each coordinate Mg(2+). The KH domain occupies 556-615 (PKIDTIKIDVDKIKIVIGKGGETIDKIIAETGVKIDIDEEGNVSIYSSDQDAINRAKEII). The S1 motif domain occupies 625–693 (DEVYRAKVVR…EKGRIDASMK (69 aa)). The tract at residues 691-737 (SMKALLPRPPKPEHDEKGEKSERPHRPRHQKDYKPKKEFTETSKDSE) is disordered. Over residues 700-737 (PKPEHDEKGEKSERPHRPRHQKDYKPKKEFTETSKDSE) the composition is skewed to basic and acidic residues.

The protein belongs to the polyribonucleotide nucleotidyltransferase family. It depends on Mg(2+) as a cofactor.

It localises to the cytoplasm. The catalysed reaction is RNA(n+1) + phosphate = RNA(n) + a ribonucleoside 5'-diphosphate. Functionally, involved in mRNA degradation. Catalyzes the phosphorolysis of single-stranded polyribonucleotides processively in the 3'- to 5'-direction. This is Polyribonucleotide nucleotidyltransferase from Streptococcus pneumoniae serotype 4 (strain ATCC BAA-334 / TIGR4).